Consider the following 498-residue polypeptide: ATP synthase subunit beta, chloroplastic (498 aa).

Phosphothreonine is present on threonine 6. Phosphoserine is present on serine 13. Residue glycine 172 to threonine 179 coordinates ATP.

It belongs to the ATPase alpha/beta chains family. In terms of assembly, F-type ATPases have 2 components, CF(1) - the catalytic core - and CF(0) - the membrane proton channel. CF(1) has five subunits: alpha(3), beta(3), gamma(1), delta(1), epsilon(1). CF(0) has four main subunits: a(1), b(1), b'(1) and c(9-12).

It is found in the plastid. The protein localises to the chloroplast thylakoid membrane. The catalysed reaction is ATP + H2O + 4 H(+)(in) = ADP + phosphate + 5 H(+)(out). Produces ATP from ADP in the presence of a proton gradient across the membrane. The catalytic sites are hosted primarily by the beta subunits. This chain is ATP synthase subunit beta, chloroplastic, found in Brassica napus (Rape).